We begin with the raw amino-acid sequence, 366 residues long: Histidinol-phosphate aminotransferase (366 aa).

The residue at position 228 (Lys228) is an N6-(pyridoxal phosphate)lysine.

This sequence belongs to the class-II pyridoxal-phosphate-dependent aminotransferase family. Histidinol-phosphate aminotransferase subfamily. In terms of assembly, homodimer. Pyridoxal 5'-phosphate serves as cofactor.

It carries out the reaction L-histidinol phosphate + 2-oxoglutarate = 3-(imidazol-4-yl)-2-oxopropyl phosphate + L-glutamate. It functions in the pathway amino-acid biosynthesis; L-histidine biosynthesis; L-histidine from 5-phospho-alpha-D-ribose 1-diphosphate: step 7/9. The sequence is that of Histidinol-phosphate aminotransferase from Corynebacterium glutamicum (strain R).